A 208-amino-acid polypeptide reads, in one-letter code: MLYIYMHFPNPDTVTGNLIFQVLDKTVEMSSEQLHKLFTKHRSEFFTEIAALLKLNFIVIVDRYIWSGLAYAQADGITIETKDTFKPDYTFFLSSNKPLKEKPFNIQRLFEEKDKQEIIFNNFITIMNDVPKNKFCIIPAHLNKEIIYNIVLTKTLKVFDNNSCLKYIKMYDDKYLNVQDLNLIDFDWQKCIEDNNDKEEYDDNNFIV.

This sequence belongs to the thymidylate kinase family.

Catalyzes the conversion of dTMP to dTDP. This chain is Truncated thymidylate kinase (TMK), found in Ornithodoros (relapsing fever ticks).